The sequence spans 138 residues: Acidic phospholipase A2 ammodytin I1 (138 aa).

Positions 1–16 (MRILWIVAVCLIGAEG) are cleaved as a signal peptide. 7 cysteine pairs are disulfide-bonded: Cys-42–Cys-131, Cys-44–Cys-60, Cys-59–Cys-111, Cys-65–Cys-138, Cys-66–Cys-104, Cys-73–Cys-97, and Cys-91–Cys-102. Positions 43, 45, and 47 each coordinate Ca(2+). Residue His-63 is part of the active site. Ca(2+) is bound at residue Asp-64. Asp-105 is an active-site residue.

It belongs to the phospholipase A2 family. Group II subfamily. D49 sub-subfamily. It depends on Ca(2+) as a cofactor. As to expression, expressed by the venom gland.

It localises to the secreted. It carries out the reaction a 1,2-diacyl-sn-glycero-3-phosphocholine + H2O = a 1-acyl-sn-glycero-3-phosphocholine + a fatty acid + H(+). Snake venom phospholipase A2 (PLA2) that has enzymatic activity but is non-toxic. PLA2 catalyzes the calcium-dependent hydrolysis of the 2-acyl groups in 3-sn-phosphoglycerides. The protein is Acidic phospholipase A2 ammodytin I1 of Vipera ammodytes ammodytes (Western sand viper).